A 594-amino-acid polypeptide reads, in one-letter code: UvrABC system protein C (594 aa).

Residues 14–91 form the GIY-YIG domain; the sequence is DQPGCYLMKD…IKKHDPKYNI (78 aa). Positions 196–231 constitute a UVR domain; it reads KEVRSELETKMYEASEKLEFERAKELRDQIAHIDAI.

This sequence belongs to the UvrC family. Interacts with UvrB in an incision complex.

It is found in the cytoplasm. The UvrABC repair system catalyzes the recognition and processing of DNA lesions. UvrC both incises the 5' and 3' sides of the lesion. The N-terminal half is responsible for the 3' incision and the C-terminal half is responsible for the 5' incision. The protein is UvrABC system protein C of Bacillus anthracis (strain A0248).